The primary structure comprises 88 residues: Phosphocarrier protein HPr (88 aa).

An HPr domain is found at 1-88; sequence MEKREFNIIA…DTMKKEGLAE (88 aa). The active-site Pros-phosphohistidine intermediate is the histidine 15. Serine 46 is modified (phosphoserine; by HPrK/P).

The protein belongs to the HPr family.

Its subcellular location is the cytoplasm. With respect to regulation, phosphorylation on Ser-46 inhibits the phosphoryl transfer from enzyme I to HPr. General (non sugar-specific) component of the phosphoenolpyruvate-dependent sugar phosphotransferase system (sugar PTS). This major carbohydrate active-transport system catalyzes the phosphorylation of incoming sugar substrates concomitantly with their translocation across the cell membrane. The phosphoryl group from phosphoenolpyruvate (PEP) is transferred to the phosphoryl carrier protein HPr by enzyme I. Phospho-HPr then transfers it to the PTS EIIA domain. In terms of biological role, P-Ser-HPr interacts with the catabolite control protein A (CcpA), forming a complex that binds to DNA at the catabolite response elements cre, operator sites preceding a large number of catabolite-regulated genes. Thus, P-Ser-HPr is a corepressor in carbon catabolite repression (CCR), a mechanism that allows bacteria to coordinate and optimize the utilization of available carbon sources. P-Ser-HPr also plays a role in inducer exclusion, in which it probably interacts with several non-PTS permeases and inhibits their transport activity. This chain is Phosphocarrier protein HPr (ptsH), found in Lacticaseibacillus casei (Lactobacillus casei).